The chain runs to 83 residues: Mu-theraphotoxin-Hhn2j 4 (83 aa).

A signal peptide spans 1–21 (MKASMFLALAGSVLLFVVGYA). The propeptide occupies 22 to 48 (SESEEKEFPIELLSKIFAVDVFKGEER). 3 disulfides stabilise this stretch: Cys-50–Cys-65, Cys-57–Cys-70, and Cys-64–Cys-77. Leu-81 carries the post-translational modification Leucine amide.

The protein belongs to the neurotoxin 10 (Hwtx-1) family. 15 (Hntx-3) subfamily. As to quaternary structure, monomer. In terms of tissue distribution, expressed by the venom gland.

Its subcellular location is the secreted. In terms of biological role, lethal neurotoxin. Selectively blocks tetrodotoxin-sensitive voltage-gated sodium channels (Nav). Does not affect tetrodotoxin-resistant voltage-gated sodium channels or calcium channels. This is Mu-theraphotoxin-Hhn2j 4 from Cyriopagopus hainanus (Chinese bird spider).